The sequence spans 210 residues: Proteasome subunit beta (210 aa).

The propeptide at M1 to G9 is removed in mature form; by autocatalysis. Residue T10 is the Nucleophile of the active site.

The protein belongs to the peptidase T1B family. In terms of assembly, the 20S proteasome core is composed of 14 alpha and 14 beta subunits that assemble into four stacked heptameric rings, resulting in a barrel-shaped structure. The two inner rings, each composed of seven catalytic beta subunits, are sandwiched by two outer rings, each composed of seven alpha subunits. The catalytic chamber with the active sites is on the inside of the barrel. Has a gated structure, the ends of the cylinder being occluded by the N-termini of the alpha-subunits. Is capped at one or both ends by the proteasome regulatory ATPase, PAN.

The protein resides in the cytoplasm. The enzyme catalyses Cleavage of peptide bonds with very broad specificity.. With respect to regulation, the formation of the proteasomal ATPase PAN-20S proteasome complex, via the docking of the C-termini of PAN into the intersubunit pockets in the alpha-rings, triggers opening of the gate for substrate entry. Interconversion between the open-gate and close-gate conformations leads to a dynamic regulation of the 20S proteasome proteolysis activity. Component of the proteasome core, a large protease complex with broad specificity involved in protein degradation. This is Proteasome subunit beta from Methanosarcina thermophila.